Reading from the N-terminus, the 165-residue chain is MTRLCLPRPEAREDPIPVPPRGLGAGEGSGSPVRPPVSTWGPSWAQLLDSVLWLGALGLTIQAVFSTTGPALLLLLVSFLTFDLLHRPAGHTLPQRKLLTRGQSQGAGEGPGQQEALLLQMGTVSGQLSLQDALLLLLMGLGPLLRACGMPLTLLGLAFCLHPWA.

The segment at M1 to P36 is disordered. Residues L135–L155 form a helical membrane-spanning segment.

The protein localises to the membrane. This is an uncharacterized protein from Homo sapiens (Human).